The chain runs to 335 residues: Methionine import ATP-binding protein MetN (335 aa).

An ABC transporter domain is found at 2-241; it reads IQFQRLHKSY…PKHATTRRFV (240 aa). 38–45 is an ATP binding site; that stretch reads GHSGAGKS.

The protein belongs to the ABC transporter superfamily. Methionine importer (TC 3.A.1.24) family. In terms of assembly, the complex is composed of two ATP-binding proteins (MetN), two transmembrane proteins (MetI) and a solute-binding protein (MetQ).

Its subcellular location is the cell inner membrane. It catalyses the reaction L-methionine(out) + ATP + H2O = L-methionine(in) + ADP + phosphate + H(+). The catalysed reaction is D-methionine(out) + ATP + H2O = D-methionine(in) + ADP + phosphate + H(+). Its function is as follows. Part of the ABC transporter complex MetNIQ involved in methionine import. Responsible for energy coupling to the transport system. This chain is Methionine import ATP-binding protein MetN, found in Xanthomonas euvesicatoria pv. vesicatoria (strain 85-10) (Xanthomonas campestris pv. vesicatoria).